A 282-amino-acid chain; its full sequence is ATP synthase subunit a (282 aa).

5 helical membrane-spanning segments follow: residues 45–65 (AIHVDTMAISIALGFLFLWLF), 106–126 (IAPLALTIFVWVFLMNFMDLI), 160–179 (INATLGMSLSVFVLIVFYSI), 232–252 (LIFILIAILPWGVQWALSVPW), and 253–273 (AIFHILIIVLQAFIFMMLTIV).

This sequence belongs to the ATPase A chain family. In terms of assembly, F-type ATPases have 2 components, CF(1) - the catalytic core - and CF(0) - the membrane proton channel. CF(1) has five subunits: alpha(3), beta(3), gamma(1), delta(1), epsilon(1). CF(0) has three main subunits: a(1), b(2) and c(9-12). The alpha and beta chains form an alternating ring which encloses part of the gamma chain. CF(1) is attached to CF(0) by a central stalk formed by the gamma and epsilon chains, while a peripheral stalk is formed by the delta and b chains.

The protein resides in the cell inner membrane. In terms of biological role, key component of the proton channel; it plays a direct role in the translocation of protons across the membrane. This Marinomonas sp. (strain MWYL1) protein is ATP synthase subunit a.